Reading from the N-terminus, the 535-residue chain is Cytochrome P450 4c3 (535 aa).

2 residues coordinate heme: glutamate 342 and cysteine 481.

This sequence belongs to the cytochrome P450 family. Requires heme as cofactor.

It is found in the endoplasmic reticulum membrane. Its subcellular location is the microsome membrane. Its function is as follows. May be involved in the metabolism of insect hormones and in the breakdown of synthetic insecticides. This chain is Cytochrome P450 4c3 (Cyp4c3), found in Drosophila melanogaster (Fruit fly).